Reading from the N-terminus, the 388-residue chain is Chorismate synthase (388 aa).

NADP(+) is bound by residues R39 and R45. FMN contacts are provided by residues 130 to 132, 251 to 252, A296, 311 to 315, and R337; these read RSS, NA, and KPIPT.

The protein belongs to the chorismate synthase family. Homotetramer. It depends on FMNH2 as a cofactor.

It catalyses the reaction 5-O-(1-carboxyvinyl)-3-phosphoshikimate = chorismate + phosphate. The protein operates within metabolic intermediate biosynthesis; chorismate biosynthesis; chorismate from D-erythrose 4-phosphate and phosphoenolpyruvate: step 7/7. Its function is as follows. Catalyzes the anti-1,4-elimination of the C-3 phosphate and the C-6 proR hydrogen from 5-enolpyruvylshikimate-3-phosphate (EPSP) to yield chorismate, which is the branch point compound that serves as the starting substrate for the three terminal pathways of aromatic amino acid biosynthesis. This reaction introduces a second double bond into the aromatic ring system. This Streptococcus equi subsp. equi (strain 4047) protein is Chorismate synthase.